We begin with the raw amino-acid sequence, 119 residues long: Hydrogenase maturation factor HypA (119 aa).

H2 contributes to the Ni(2+) binding site. The Zn(2+) site is built by C73, C76, C89, and C92.

It belongs to the HypA/HybF family.

Its function is as follows. Involved in the maturation of [NiFe] hydrogenases. Required for nickel insertion into the metal center of the hydrogenase. The polypeptide is Hydrogenase maturation factor HypA (Dehalococcoides mccartyi (strain ATCC BAA-2266 / KCTC 15142 / 195) (Dehalococcoides ethenogenes (strain 195))).